A 504-amino-acid chain; its full sequence is L-carnitine/gamma-butyrobetaine antiporter (504 aa).

Transmembrane regions (helical) follow at residues 10–30, 51–71, 92–112, 143–163, 195–215, 231–251, 263–283, 316–336, 347–367, 398–418, 446–466, and 475–495; these read IEPK…WLTV, WGWA…WLVF, IFMM…SIEI, GPLP…FFFV, FYLV…TPLV, LDAI…ACGL, SYLS…SFIM, WTVF…IFLA, LCFG…TVLG, WAAL…CFIA, LLVR…LLAL, and AIIA…LSFI.

The protein belongs to the BCCT transporter (TC 2.A.15) family. CaiT subfamily. In terms of assembly, homotrimer.

It is found in the cell inner membrane. The catalysed reaction is 4-(trimethylamino)butanoate(in) + (R)-carnitine(out) = 4-(trimethylamino)butanoate(out) + (R)-carnitine(in). It participates in amine and polyamine metabolism; carnitine metabolism. Functionally, catalyzes the exchange of L-carnitine for gamma-butyrobetaine. The protein is L-carnitine/gamma-butyrobetaine antiporter of Escherichia coli (strain K12 / MC4100 / BW2952).